The sequence spans 35 residues: Flavodoxin (35 aa).

A Flavodoxin-like domain is found at 4-35 (IGLFYGTZTGKTESVAEIIDEFGDEVVTLDID).

It belongs to the flavodoxin family. The cofactor is FMN.

Functionally, low-potential electron donor to a number of redox enzymes. The polypeptide is Flavodoxin (Nostoc sp. (strain MAC)).